The sequence spans 78 residues: Small ribosomal subunit protein bS16c (78 aa).

The protein belongs to the bacterial ribosomal protein bS16 family.

Its subcellular location is the plastid. The protein resides in the chloroplast. The sequence is that of Small ribosomal subunit protein bS16c from Gracilaria tenuistipitata var. liui (Red alga).